The primary structure comprises 695 residues: Elongation factor G (695 aa).

A tr-type G domain is found at 10–285 (DKTRNIGIMA…GVVDYLPSPL (276 aa)). Residues 19 to 26 (AHIDAGKT), 83 to 87 (DTPGH), and 137 to 140 (NKMD) contribute to the GTP site.

The protein belongs to the TRAFAC class translation factor GTPase superfamily. Classic translation factor GTPase family. EF-G/EF-2 subfamily.

The protein resides in the cytoplasm. Catalyzes the GTP-dependent ribosomal translocation step during translation elongation. During this step, the ribosome changes from the pre-translocational (PRE) to the post-translocational (POST) state as the newly formed A-site-bound peptidyl-tRNA and P-site-bound deacylated tRNA move to the P and E sites, respectively. Catalyzes the coordinated movement of the two tRNA molecules, the mRNA and conformational changes in the ribosome. In Latilactobacillus sakei subsp. sakei (strain 23K) (Lactobacillus sakei subsp. sakei), this protein is Elongation factor G.